The following is a 403-amino-acid chain: Arginine biosynthesis bifunctional protein ArgJ (403 aa).

6 residues coordinate substrate: threonine 149, lysine 175, threonine 186, glutamate 272, asparagine 398, and threonine 403. The Nucleophile role is filled by threonine 186.

This sequence belongs to the ArgJ family. In terms of assembly, heterotetramer of two alpha and two beta chains.

It is found in the cytoplasm. It carries out the reaction N(2)-acetyl-L-ornithine + L-glutamate = N-acetyl-L-glutamate + L-ornithine. It catalyses the reaction L-glutamate + acetyl-CoA = N-acetyl-L-glutamate + CoA + H(+). The protein operates within amino-acid biosynthesis; L-arginine biosynthesis; L-ornithine and N-acetyl-L-glutamate from L-glutamate and N(2)-acetyl-L-ornithine (cyclic): step 1/1. Its pathway is amino-acid biosynthesis; L-arginine biosynthesis; N(2)-acetyl-L-ornithine from L-glutamate: step 1/4. Functionally, catalyzes two activities which are involved in the cyclic version of arginine biosynthesis: the synthesis of N-acetylglutamate from glutamate and acetyl-CoA as the acetyl donor, and of ornithine by transacetylation between N(2)-acetylornithine and glutamate. The sequence is that of Arginine biosynthesis bifunctional protein ArgJ from Caldanaerobacter subterraneus subsp. tengcongensis (strain DSM 15242 / JCM 11007 / NBRC 100824 / MB4) (Thermoanaerobacter tengcongensis).